A 125-amino-acid chain; its full sequence is Small ribosomal subunit protein bS16 (125 aa).

A disordered region spans residues 87 to 125 (EGKKKQALARQSASKKAVKEKTEESKGSEVDSETSTSAD). Residues 103 to 115 (AVKEKTEESKGSE) are compositionally biased toward basic and acidic residues.

It belongs to the bacterial ribosomal protein bS16 family.

The sequence is that of Small ribosomal subunit protein bS16 from Prochlorococcus marinus (strain MIT 9211).